The primary structure comprises 271 residues: Phosphate import ATP-binding protein PstB (271 aa).

Residues 25–266 enclose the ABC transporter domain; sequence VDVRQLSLWY…PKHPYTEAYI (242 aa). 57–64 serves as a coordination point for ATP; that stretch reads GPSGCGKS.

This sequence belongs to the ABC transporter superfamily. Phosphate importer (TC 3.A.1.7) family. As to quaternary structure, the complex is composed of two ATP-binding proteins (PstB), two transmembrane proteins (PstC and PstA) and a solute-binding protein (PstS).

It is found in the cell inner membrane. The catalysed reaction is phosphate(out) + ATP + H2O = ADP + 2 phosphate(in) + H(+). Part of the ABC transporter complex PstSACB involved in phosphate import. Responsible for energy coupling to the transport system. This is Phosphate import ATP-binding protein PstB from Thermus thermophilus (strain ATCC BAA-163 / DSM 7039 / HB27).